A 283-amino-acid chain; its full sequence is Transport and Golgi organization protein 2 (283 aa).

This sequence belongs to the Tango2 family.

The protein localises to the cytoplasm. It localises to the mitochondrion. Its subcellular location is the golgi apparatus. May play a role in Golgi organization. The chain is Transport and Golgi organization protein 2 (Tango2) from Drosophila melanogaster (Fruit fly).